Here is a 278-residue protein sequence, read N- to C-terminus: Ankyrin repeat and SOCS box protein 13 (278 aa).

6 ANK repeats span residues 18–47, 51–80, 84–113, 116–145, 149–178, and 181–210; these read VERT…CVNQ, DSIT…QVDA, DGST…KVNP, YTAS…NLEA, HFGT…NVNA, and LHET…NIYA. Residues 229-278 enclose the SOCS box domain; the sequence is AKCFEYYEKTPLSLSQLCRVSLRKATGVRGLEKVAKLNIPPRLIDYLSYN.

The protein belongs to the ankyrin SOCS box (ASB) family.

The protein operates within protein modification; protein ubiquitination. Functionally, may be a substrate-recognition component of a SCF-like ECS (Elongin-Cullin-SOCS-box protein) E3 ubiquitin-protein ligase complex which mediates the ubiquitination and subsequent proteasomal degradation of target proteins. This is Ankyrin repeat and SOCS box protein 13 (Asb13) from Mus musculus (Mouse).